A 339-amino-acid polypeptide reads, in one-letter code: Tetraacyldisaccharide 4'-kinase (339 aa).

Residue 62-69 (VAGGTGKT) coordinates ATP.

Belongs to the LpxK family.

The catalysed reaction is a lipid A disaccharide + ATP = a lipid IVA + ADP + H(+). Its pathway is glycolipid biosynthesis; lipid IV(A) biosynthesis; lipid IV(A) from (3R)-3-hydroxytetradecanoyl-[acyl-carrier-protein] and UDP-N-acetyl-alpha-D-glucosamine: step 6/6. Functionally, transfers the gamma-phosphate of ATP to the 4'-position of a tetraacyldisaccharide 1-phosphate intermediate (termed DS-1-P) to form tetraacyldisaccharide 1,4'-bis-phosphate (lipid IVA). The protein is Tetraacyldisaccharide 4'-kinase of Xylella fastidiosa (strain 9a5c).